Consider the following 154-residue polypeptide: UPF0178 protein GM21_2006 (154 aa).

Belongs to the UPF0178 family.

This Geobacter sp. (strain M21) protein is UPF0178 protein GM21_2006.